Reading from the N-terminus, the 282-residue chain is Putative 4-diphosphocytidyl-2-C-methyl-D-erythritol kinase (282 aa).

The active site involves K10. 94–104 (PICAGLGGGSS) is a binding site for ATP. D136 is an active-site residue.

The protein belongs to the GHMP kinase family. IspE subfamily.

The enzyme catalyses 4-CDP-2-C-methyl-D-erythritol + ATP = 4-CDP-2-C-methyl-D-erythritol 2-phosphate + ADP + H(+). Functionally, catalyzes the phosphorylation of the position 2 hydroxy group of 4-diphosphocytidyl-2C-methyl-D-erythritol. The chain is Putative 4-diphosphocytidyl-2-C-methyl-D-erythritol kinase (ipk) from Streptococcus mutans serotype c (strain ATCC 700610 / UA159).